A 367-amino-acid chain; its full sequence is Innexin inx4 (367 aa).

Residues 1–21 (MYAAVKPLSKYLQFKSVHIYD) are Cytoplasmic-facing. A helical membrane pass occupies residues 22–42 (AIFTLHSKVTVALLLACTFLL). Residues 43–110 (SSKQYFGDPI…PENRNYITYY (68 aa)) lie on the Extracellular side of the membrane. Residues 111–131 (QWVVLVLLLESFVFYMPAFLW) form a helical membrane-spanning segment. At 132-186 (KIWEGGRLKHLCDDFHKMAVCKDKSRTHLRVLVNYFSSDYKETHFRYFVSYVFCE) the chain is on the cytoplasmic side. The helical transmembrane segment at 187-207 (ILNLSISILNFLLLDVFFGGF) threads the bilayer. Over 208 to 268 (WGRYRNALLS…LLPLNILNEK (61 aa)) the chain is Extracellular. The chain crosses the membrane as a helical span at residues 269 to 289 (IFAFLWIWFILVAMLISLKFL). The Cytoplasmic segment spans residues 290 to 367 (YRLATVLYPG…IKIPPGADKI (78 aa)).

It belongs to the pannexin family. In terms of tissue distribution, expressed in nurse cells and oocyte during oogenesis. Uniform expression in imaginal wing disk and low expression in developing imaginal CNS. Expressed in embryonic pole cells and primordial germ cells.

It is found in the cell membrane. The protein localises to the cell junction. The protein resides in the gap junction. In terms of biological role, structural component of the gap junctions in germline cells. Required for differentiation and survival of germline cysts in females and of spermatogonia in males; gap junctional communication between spermatogonia and somatic cyst cells may be required for normal differentiation and survival of spermatogonia. The polypeptide is Innexin inx4 (zpg) (Drosophila melanogaster (Fruit fly)).